A 256-amino-acid polypeptide reads, in one-letter code: Biosynthetic peptidoglycan transglycosylase (256 aa).

A helical membrane pass occupies residues 26–48 (VARWLAYAGGVFAGAWLATQLYY).

The protein belongs to the glycosyltransferase 51 family.

Its subcellular location is the cell inner membrane. It carries out the reaction [GlcNAc-(1-&gt;4)-Mur2Ac(oyl-L-Ala-gamma-D-Glu-L-Lys-D-Ala-D-Ala)](n)-di-trans,octa-cis-undecaprenyl diphosphate + beta-D-GlcNAc-(1-&gt;4)-Mur2Ac(oyl-L-Ala-gamma-D-Glu-L-Lys-D-Ala-D-Ala)-di-trans,octa-cis-undecaprenyl diphosphate = [GlcNAc-(1-&gt;4)-Mur2Ac(oyl-L-Ala-gamma-D-Glu-L-Lys-D-Ala-D-Ala)](n+1)-di-trans,octa-cis-undecaprenyl diphosphate + di-trans,octa-cis-undecaprenyl diphosphate + H(+). It participates in cell wall biogenesis; peptidoglycan biosynthesis. Peptidoglycan polymerase that catalyzes glycan chain elongation from lipid-linked precursors. The sequence is that of Biosynthetic peptidoglycan transglycosylase from Burkholderia thailandensis (strain ATCC 700388 / DSM 13276 / CCUG 48851 / CIP 106301 / E264).